A 76-amino-acid chain; its full sequence is UPF0352 protein PC1_1633 (76 aa).

This sequence belongs to the UPF0352 family.

In Pectobacterium carotovorum subsp. carotovorum (strain PC1), this protein is UPF0352 protein PC1_1633.